Here is a 387-residue protein sequence, read N- to C-terminus: ATP phosphoribosyltransferase regulatory subunit (387 aa).

Belongs to the class-II aminoacyl-tRNA synthetase family. HisZ subfamily. As to quaternary structure, heteromultimer composed of HisG and HisZ subunits.

The protein resides in the cytoplasm. The protein operates within amino-acid biosynthesis; L-histidine biosynthesis; L-histidine from 5-phospho-alpha-D-ribose 1-diphosphate: step 1/9. Functionally, required for the first step of histidine biosynthesis. May allow the feedback regulation of ATP phosphoribosyltransferase activity by histidine. The sequence is that of ATP phosphoribosyltransferase regulatory subunit from Polynucleobacter asymbioticus (strain DSM 18221 / CIP 109841 / QLW-P1DMWA-1) (Polynucleobacter necessarius subsp. asymbioticus).